We begin with the raw amino-acid sequence, 244 residues long: Tetraspanin-7 (244 aa).

The Cytoplasmic segment spans residues 1–11 (METKPVITCLK). Residues 12-35 (TLLIIYSFVFWITGVILLAVGVWG) form a helical membrane-spanning segment. Over 36–51 (KLTLGTYISLIAENST) the chain is Extracellular. An N-linked (GlcNAc...) asparagine glycan is attached at Asn-49. A helical membrane pass occupies residues 52 to 70 (NAPYVLIGTGTTIVVFGLF). The Cytoplasmic portion of the chain corresponds to 71–81 (GCFATCRGSPW). A helical transmembrane segment spans residues 82 to 107 (MLKLYAMFLSLVFLAELVAGISGFVF). Over 108-208 (RHEIKDTFLR…LVTSFMETNM (101 aa)) the chain is Extracellular. Residues Asn-150, Asn-153, Asn-172, and Asn-183 are each glycosylated (N-linked (GlcNAc...) asparagine). Residues 209–229 (GIIAGVAFGIAFSQLIGMLLA) traverse the membrane as a helical segment. Residues 230–244 (CCLSRFITANQYEMV) lie on the Cytoplasmic side of the membrane.

Belongs to the tetraspanin (TM4SF) family.

Its subcellular location is the membrane. Its function is as follows. May be involved in cell proliferation and cell motility. The polypeptide is Tetraspanin-7 (TSPAN7) (Pongo pygmaeus (Bornean orangutan)).